Consider the following 651-residue polypeptide: MALIRLVAPERVFSDLASMVAYPNFQVQDKITLLGSAGGDFTFTTTASVVDNGTVFAVPGGYLLRKFVGPAYSSWFSNWTGIVTFMSAPNRHLVVDTVLQATSVLNIKSNSTLEFTDTGRILPDAAVARQVLNITGSAPSVFVPLAADAAAGSKVITVAAGALSAVKGTYLYLRSNKLCDGGPNTYGVKISQIRKVVGVSTSGGVTSIRLDKALHYNYYLSDAAEVGIPTMVENVTLVSPYINEFGYDDLNRFFTSGISANFAADLHIQDGVIIGNKRPGASDIEGRSAIKFNNCVDSTVKGTCFYNIGWYGVEVLGCSEDTEVHDIHAMDVRHAISLNWQSTADGDKWGEPIEFLGVNCEAYSTTQAGFDTHDIGKRVKFVRCVSYDSADDGFQARTNGVEYLNCRAYRAAMDGFASNTGVAFPIYRECLAYDNVRSGFNCSYGGGYVYDCEAHGSQNGVRINGGRVKGGRYTRNSSSHIFVTKDVAETAQTSLEIDGVSMRYDGTGRAVYFHGTVGIDPTLVSMSNNDMTGHGLFWALLSGYTVQPTPPRMSRNLLDDTGIRGVATLVAGEATVNARVRGNFGSVANSFKWVSEVKLTRLTFPSSAGALTVTSVAQNQDVPTPNPDLNSFVIRSSNAADVSQVAWEVYL.

Residues 71–559 are interaction with the host capsular trisaccharides; that stretch reads AYSSWFSNWT…PPRMSRNLLD (489 aa). 8 residues coordinate substrate: Gln-130, Lys-177, Asn-217, Lys-291, Glu-314, Asn-339, Trp-340, and Arg-378.

This sequence belongs to the K1-specific depolymerase family. In terms of assembly, homotrimer.

Its subcellular location is the virion. Functions as a receptor binding protein (RBP) and mediates the attachment to the host capsular exopolysaccharides. Displays a lyase activity that specifically degrades the K1-type polysaccharides of Klebsiella pneumoniae capsule. The chain is Depolymerase, capsule K1-specific from Klebsiella pneumoniae (Bacteriophage NTUH-K2044-K1-1).